The sequence spans 259 residues: Ribonuclease HII (259 aa).

An RNase H type-2 domain is found at threonine 70–glutamate 258. The a divalent metal cation site is built by aspartate 76, glutamate 77, and aspartate 168.

It belongs to the RNase HII family. It depends on Mn(2+) as a cofactor. Mg(2+) is required as a cofactor.

The protein localises to the cytoplasm. It carries out the reaction Endonucleolytic cleavage to 5'-phosphomonoester.. Functionally, endonuclease that specifically degrades the RNA of RNA-DNA hybrids. The sequence is that of Ribonuclease HII from Streptococcus pneumoniae serotype 19F (strain G54).